A 508-amino-acid chain; its full sequence is Aromatase (508 aa).

Cys437 is a binding site for heme.

This sequence belongs to the cytochrome P450 family. It depends on heme as a cofactor.

Its subcellular location is the membrane. The catalysed reaction is testosterone + 3 reduced [NADPH--hemoprotein reductase] + 3 O2 = 17beta-estradiol + formate + 3 oxidized [NADPH--hemoprotein reductase] + 4 H2O + 4 H(+). It carries out the reaction androst-4-ene-3,17-dione + 3 reduced [NADPH--hemoprotein reductase] + 3 O2 = estrone + formate + 3 oxidized [NADPH--hemoprotein reductase] + 4 H2O + 4 H(+). In terms of biological role, catalyzes the formation of aromatic C18 estrogens from C19 androgens. This Rattus norvegicus (Rat) protein is Aromatase (Cyp19a1).